The sequence spans 190 residues: Putative hydrolase YdeN (190 aa).

Residues serine 71, aspartate 137, and histidine 164 each act as charge relay system in the active site.

The protein belongs to the RBBP9 family.

This is Putative hydrolase YdeN (ydeN) from Bacillus subtilis (strain 168).